Consider the following 395-residue polypeptide: MILTSESVTEGHPDKLCDQISDAILDGVICKDKNARAGIETIAGNGVVHVFGEVSNPDSVDIPGIIRKTILDIGYTSEDAGIDGNTCSIQESITSQSKEIADAVNFSLEYRNQQGDLGRNSFSQQGSGDQGSVFGYACRETPEMMPLPITIAHKLAYSLAFVRKEKILPYLLPDGKSQVTLGYDSANRPKTLETVVISAQHEDSVDLDKLRFDILERVVRPVISATGLDCSKATFLINPAGRFVTGGPSADSGLTGRKIVVDTYGCAAKHGGGALSGKDPSKLDRFASYMARWVAKHVVAADFAESIEVQISYAIGKAHPVAFNIDTHGTSTIALDKLKCAILKVFDFRPAAVIDSLDLKRPIYQKTAAYGHFGRDIFTWERICPDKLNALLGAV.

Histidine 12 is an ATP binding site. Aspartate 14 contributes to the Mg(2+) binding site. Glutamate 40 is a K(+) binding site. The L-methionine site is built by glutamate 53 and glutamine 96. The flexible loop stretch occupies residues glutamine 96–phenylalanine 106. ATP contacts are provided by residues aspartate 174–lysine 176, arginine 242–phenylalanine 243, aspartate 251, arginine 257–lysine 258, alanine 274, and lysine 278. Position 251 (aspartate 251) interacts with L-methionine. Lysine 282 contributes to the L-methionine binding site.

The protein belongs to the AdoMet synthase family. In terms of assembly, homotetramer; dimer of dimers. Requires Mg(2+) as cofactor. K(+) is required as a cofactor.

The protein resides in the cytoplasm. The enzyme catalyses L-methionine + ATP + H2O = S-adenosyl-L-methionine + phosphate + diphosphate. It functions in the pathway amino-acid biosynthesis; S-adenosyl-L-methionine biosynthesis; S-adenosyl-L-methionine from L-methionine: step 1/1. Its function is as follows. Catalyzes the formation of S-adenosylmethionine (AdoMet) from methionine and ATP. The overall synthetic reaction is composed of two sequential steps, AdoMet formation and the subsequent tripolyphosphate hydrolysis which occurs prior to release of AdoMet from the enzyme. The sequence is that of S-adenosylmethionine synthase from Tropheryma whipplei (strain TW08/27) (Whipple's bacillus).